The primary structure comprises 475 residues: Ankyrin repeat, SAM and basic leucine zipper domain-containing protein 1 (475 aa).

Positions 1–25 (MAASALRGLPVAGGGESSESEDDGW) are disordered. A phosphoserine mark is found at Ser-17, Ser-18, and Ser-20. ANK repeat units follow at residues 45 to 74 (EKKEKFKKAMTIGDVSLVQELLDSGISVDS), 78 to 107 (YGWTPLMYAASVANAELVRVLLDRGANASF), 110 to 144 (DKQSILITACSAHGSEEQILKCVELLLSRNADPNV), 148 to 177 (RLMTPIMYAARDGHTQVVALLVAHGAEVNT), 181 to 210 (NGYTALTWAARQGHKNIVLKLLELGANKML), and 214 to 243 (DGKMPSEIAKRNKHHEIFNLLSFTLNPLEG). The SAM domain maps to 272–334 (SYTAFGDLEV…KILAALKELQ (63 aa)).

In terms of assembly, interacts with DDX4, PIWIL1, RANBP9 and TDRD1.

It is found in the cytoplasm. Plays a central role during spermatogenesis by repressing transposable elements and preventing their mobilization, which is essential for the germline integrity. Acts via the piRNA metabolic process, which mediates the repression of transposable elements during meiosis by forming complexes composed of piRNAs and Piwi proteins and governs the methylation and subsequent repression of transposons. Its association with pi-bodies suggests a participation in the primary piRNAs metabolic process. Required prior to the pachytene stage to facilitate the production of multiple types of piRNAs, including those associated with repeats involved in the regulation of retrotransposons. May act by mediating protein-protein interactions during germ cell maturation. In Pan troglodytes (Chimpanzee), this protein is Ankyrin repeat, SAM and basic leucine zipper domain-containing protein 1 (ASZ1).